Here is a 357-residue protein sequence, read N- to C-terminus: Iron deficiency-induced protein A (357 aa).

Residues 1–36 constitute a signal peptide (tat-type signal); it reads MSESMFSRRDFLLGGTALAGTLLLDSFGDWRRRAEA. Fe cation-binding residues include histidine 48, tyrosine 49, tyrosine 182, tyrosine 238, and tyrosine 239.

The protein belongs to the bacterial solute-binding protein 1 family. Post-translationally, predicted to be exported by the Tat system. The position of the signal peptide cleavage has not been experimentally proven.

The protein resides in the cellular thylakoid membrane. In terms of biological role, plays an important role in protecting the acceptor side of photosystem II (PSII) against oxidative damage, especially under iron-limiting growth conditions. Its function is as follows. May also be part of a periplasmic ABC transporter complex involved in iron import. The protein is Iron deficiency-induced protein A (idiA) of Synechococcus elongatus (strain ATCC 33912 / PCC 7942 / FACHB-805) (Anacystis nidulans R2).